The primary structure comprises 550 residues: Rhodopsin kinase grk7-b (550 aa).

The disordered stretch occupies residues 22–45; it reads SSEGDAKELQKRRKSLSLPPPDVS. Ser-36 carries the post-translational modification Phosphoserine. The RGS domain maps to 57 to 174; that stretch reads YQSICVEQPI…QNSPFYDRFL (118 aa). Positions 189–451 constitute a Protein kinase domain; sequence FYEFRILGKG…DDDPRKHAFF (263 aa). Residues 195–203 and Lys-218 contribute to the ATP site; that span reads LGKGGFGEV. The active-site Proton acceptor is Asp-314. One can recognise an AGC-kinase C-terminal domain in the interval 452 to 517; sequence KSINFQRLEA…GAVPISWQKE (66 aa). The residue at position 487 (Ser-487) is a Phosphoserine. The disordered stretch occupies residues 531-550; sequence SREVTGGGNSGEKSGVCSIL. Cys-547 carries the cysteine methyl ester modification. Residue Cys-547 is the site of S-geranylgeranyl cysteine attachment. A propeptide spans 548 to 550 (removed in mature form); it reads SIL.

This sequence belongs to the protein kinase superfamily. AGC Ser/Thr protein kinase family. GPRK subfamily. Post-translationally, autophosphorylated in vitro at Ser-487. Phosphorylation at Ser-36 is regulated by light and activated by cAMP. In terms of tissue distribution, retina, cones.

It localises to the membrane. It catalyses the reaction L-threonyl-[rhodopsin] + ATP = O-phospho-L-threonyl-[rhodopsin] + ADP + H(+). The catalysed reaction is L-seryl-[rhodopsin] + ATP = O-phospho-L-seryl-[rhodopsin] + ADP + H(+). Retina-specific kinase involved in the shutoff of the photoresponse and adaptation to changing light conditions via cone opsin phosphorylation, including rhodopsin (RHO). In Xenopus laevis (African clawed frog), this protein is Rhodopsin kinase grk7-b (grk7-b).